The primary structure comprises 270 residues: Elongation factor Ts (270 aa).

Residues 76-79 (TDFV) are involved in Mg(2+) ion dislocation from EF-Tu.

Belongs to the EF-Ts family.

It is found in the cytoplasm. Functionally, associates with the EF-Tu.GDP complex and induces the exchange of GDP to GTP. It remains bound to the aminoacyl-tRNA.EF-Tu.GTP complex up to the GTP hydrolysis stage on the ribosome. The chain is Elongation factor Ts from Corynebacterium aurimucosum (strain ATCC 700975 / DSM 44827 / CIP 107346 / CN-1) (Corynebacterium nigricans).